A 158-amino-acid chain; its full sequence is Non-secretory ribonuclease (158 aa).

Positions 1–27 (MVPKLFTSQICLLPLLGLLSAEGSPHA) are cleaved as a signal peptide. Residue H42 is the Proton acceptor of the active site. At Y60 the chain carries 3'-nitrotyrosine. A substrate-binding site is contributed by 65 to 69 (KNKNT). N-linked (GlcNAc...) asparagine glycans are attached at residues N86, N92, and N111. Catalysis depends on H153, which acts as the Proton donor.

This sequence belongs to the pancreatic ribonuclease family. As to quaternary structure, interacts with and forms a tight 1:1 complex with RNH1. Dimerization of two such complexes may occur.

The protein resides in the lysosome. Its subcellular location is the cytoplasmic granule. It catalyses the reaction an [RNA] containing cytidine + H2O = an [RNA]-3'-cytidine-3'-phosphate + a 5'-hydroxy-ribonucleotide-3'-[RNA].. The enzyme catalyses an [RNA] containing uridine + H2O = an [RNA]-3'-uridine-3'-phosphate + a 5'-hydroxy-ribonucleotide-3'-[RNA].. In terms of biological role, this is a non-secretory ribonuclease. It is a pyrimidine specific nuclease with a slight preference for U. Cytotoxin and helminthotoxin. Possesses a wide variety of biological activities. This chain is Non-secretory ribonuclease (RNASE2), found in Callithrix jacchus (White-tufted-ear marmoset).